An 80-amino-acid polypeptide reads, in one-letter code: MVVIRLARGGAKNRPFYNIVVTDSRNRRDGRFIERVGFYNPVAAEGSERIRLNSDRLAYWTGVGAQVSDAVAKLLKQQAA.

It belongs to the bacterial ribosomal protein bS16 family.

The polypeptide is Small ribosomal subunit protein bS16 (Laribacter hongkongensis (strain HLHK9)).